The following is a 171-amino-acid chain: Lipoprotein signal peptidase (171 aa).

Helical transmembrane passes span 67–87 and 88–108; these read YALLGLTLAATIFMILWLWRS and TSKLIACALGLIIGGALGNAY. Catalysis depends on residues Asp118 and Asp136. The chain crosses the membrane as a helical span at residues 127–147; it reads FSWYVFNLADAAIVAGVALLL.

Belongs to the peptidase A8 family.

It is found in the cell inner membrane. It catalyses the reaction Release of signal peptides from bacterial membrane prolipoproteins. Hydrolyzes -Xaa-Yaa-Zaa-|-(S,diacylglyceryl)Cys-, in which Xaa is hydrophobic (preferably Leu), and Yaa (Ala or Ser) and Zaa (Gly or Ala) have small, neutral side chains.. It functions in the pathway protein modification; lipoprotein biosynthesis (signal peptide cleavage). This protein specifically catalyzes the removal of signal peptides from prolipoproteins. This Methylocella silvestris (strain DSM 15510 / CIP 108128 / LMG 27833 / NCIMB 13906 / BL2) protein is Lipoprotein signal peptidase.